Here is a 213-residue protein sequence, read N- to C-terminus: Probable transaldolase (213 aa).

The active-site Schiff-base intermediate with substrate is the Lys-83.

Belongs to the transaldolase family. Type 3B subfamily.

It localises to the cytoplasm. The catalysed reaction is D-sedoheptulose 7-phosphate + D-glyceraldehyde 3-phosphate = D-erythrose 4-phosphate + beta-D-fructose 6-phosphate. It functions in the pathway carbohydrate degradation; pentose phosphate pathway; D-glyceraldehyde 3-phosphate and beta-D-fructose 6-phosphate from D-ribose 5-phosphate and D-xylulose 5-phosphate (non-oxidative stage): step 2/3. Functionally, transaldolase is important for the balance of metabolites in the pentose-phosphate pathway. The protein is Probable transaldolase of Oceanobacillus iheyensis (strain DSM 14371 / CIP 107618 / JCM 11309 / KCTC 3954 / HTE831).